Consider the following 237-residue polypeptide: Oil body-associated protein 2C (237 aa).

The protein belongs to the OBAP family.

This Arabidopsis thaliana (Mouse-ear cress) protein is Oil body-associated protein 2C.